Reading from the N-terminus, the 562-residue chain is Protein wntless (562 aa).

The Cytoplasmic segment spans residues 1–13; sequence MSGTILENLSGRK. Residues 14–34 form a helical membrane-spanning segment; the sequence is LSILVGSLLLCQVLCFLLGGL. Residues 35–239 are Lumenal-facing; it reads YAPVPAGHTN…AIHQNGGFTH (205 aa). Asn-58 carries an N-linked (GlcNAc...) asparagine glycan. Residues 240-260 form a helical membrane-spanning segment; that stretch reads VWLMLKTLLFPFVVGIMVWFW. Residues 261-270 lie on the Cytoplasmic side of the membrane; that stretch reads RRVHLLQRSP. Residues 271 to 291 form a helical membrane-spanning segment; sequence ALLEYMLLYLGGALTFLNLPL. Over 292–311 the chain is Lumenal; that stretch reads EYLSLTIEMPYMLLLSDIRQ. The helical transmembrane segment at 312–332 threads the bilayer; that stretch reads GIFYAMLLSFWLVFAGEHMLI. The Cytoplasmic portion of the chain corresponds to 333-344; sequence QDSHNKSTIRSR. Residues 345-365 traverse the membrane as a helical segment; that stretch reads YWKHLSAVVVGCISLFVFDIS. Residues 366–386 lie on the Lumenal side of the membrane; it reads ERGVQLRNPFYSIWTTPLGAK. Residues 387-407 traverse the membrane as a helical segment; the sequence is VAMSFILLAGVSAAVYFLFLC. The Cytoplasmic portion of the chain corresponds to 408 to 441; sequence YMISKVFKNIGDKRTSLPSMSQARRLHYEGLIYR. The helical transmembrane segment at 442-462 threads the bilayer; the sequence is FKFLMLATLLCAALTVTGFIM. At 463 to 482 the chain is on the lumenal side; it reads GQMAEGQWKWNDDVEIQLTS. The chain crosses the membrane as a helical span at residues 483 to 503; it reads AFLTGVYGMWNIYIFALLILY. Residues 504–562 lie on the Cytoplasmic side of the membrane; it reads APSHKQWPTMHHSDETTQSNENIVASAASEEIEFSNLPSDSNPSEISSLTSFTRKVAFE. Residues 538–562 form a disordered region; that stretch reads SNLPSDSNPSEISSLTSFTRKVAFE. Over residues 539–556 the composition is skewed to polar residues; that stretch reads NLPSDSNPSEISSLTSFT.

It belongs to the wntless family. In terms of assembly, interacts with wg; in the Golgi. Interacts with Vps35, a component of the retromer complex; wls stability is regulated by Vps35.

Its subcellular location is the presynaptic cell membrane. The protein localises to the postsynaptic cell membrane. The protein resides in the cell membrane. It is found in the endoplasmic reticulum membrane. It localises to the endosome membrane. Its subcellular location is the golgi apparatus membrane. A segment polarity gene required for wingless (wg)-dependent patterning processes, acting in both wg-sending cells and wg-target cells. In non-neuronal cells wls directs wg secretion. The wls traffic loop encompasses the Golgi, the cell surface, an endocytic compartment and a retrograde route leading back to the Golgi, and involves clathrin-mediated endocytosis and the retromer complex (a conserved protein complex consisting of Vps35 and Vps26). In neuronal cells (the larval motorneuron NMJ), the wg signal moves across the synapse via the release of wls-containing exosome-like vesicles. Postsynaptic wls is required for the trafficking of fz2 through the fz2-interacting protein Grip. In Drosophila persimilis (Fruit fly), this protein is Protein wntless.